Here is a 306-residue protein sequence, read N- to C-terminus: UDP-3-O-acyl-N-acetylglucosamine deacetylase (306 aa).

Zn(2+)-binding residues include His79, His238, and Asp242. His265 (proton donor) is an active-site residue.

This sequence belongs to the LpxC family. Zn(2+) is required as a cofactor.

It catalyses the reaction a UDP-3-O-[(3R)-3-hydroxyacyl]-N-acetyl-alpha-D-glucosamine + H2O = a UDP-3-O-[(3R)-3-hydroxyacyl]-alpha-D-glucosamine + acetate. It participates in glycolipid biosynthesis; lipid IV(A) biosynthesis; lipid IV(A) from (3R)-3-hydroxytetradecanoyl-[acyl-carrier-protein] and UDP-N-acetyl-alpha-D-glucosamine: step 2/6. Its function is as follows. Catalyzes the hydrolysis of UDP-3-O-myristoyl-N-acetylglucosamine to form UDP-3-O-myristoylglucosamine and acetate, the committed step in lipid A biosynthesis. The sequence is that of UDP-3-O-acyl-N-acetylglucosamine deacetylase from Shewanella halifaxensis (strain HAW-EB4).